Here is a 1115-residue protein sequence, read N- to C-terminus: Serine/threonine-protein kinase/endoribonuclease IRE1 (1115 aa).

A signal peptide spans 1–18; it reads MRLLRRNMLVLTLLVCVF. Over 19-526 the chain is Lumenal; sequence SSIISCSIPL…RELDEKNQNS (508 aa). N-linked (GlcNAc...) asparagine glycans are attached at residues Asn-111, Asn-213, Asn-298, and Asn-397. A helical membrane pass occupies residues 527–555; it reads LLLKFGSLVYRIIETGVFLLLFLIFCAIL. Residues 556-1115 lie on the Cytoplasmic side of the membrane; sequence QRFKILPPLY…DQILREFLYS (560 aa). The disordered stretch occupies residues 617–658; it reads GSLKSEKDNDDADEDDEKSLDLTTEKKKRKRGSRGGKKGRKS. The segment covering 624-634 has biased composition (acidic residues); the sequence is DNDDADEDDEK. Basic residues predominate over residues 642–658; it reads KKKRKRGSRGGKKGRKS. In terms of domain architecture, Protein kinase spans 674–980; the sequence is VVSEKILGYG…AMKVLRHPLF (307 aa). ADP is bound by residues Ser-684, Lys-702, Glu-746, Cys-748, and Asn-751. Asp-797 serves as the catalytic Proton acceptor. Mg(2+) is bound by residues Asn-802 and Asp-828. Ser-840 and Ser-841 each carry phosphoserine; by autocatalysis. Thr-844 bears the Phosphothreonine; by autocatalysis mark. The region spanning 983–1115 is the KEN domain; it reads KSKKLEFLLK…DQILREFLYS (133 aa).

It belongs to the protein kinase superfamily. Ser/Thr protein kinase family. Homodimer; in response to the accumulation of unfolded proteins. Dimerization of lumenal domains help position the cytoplasmic kinase domains optimally for autophosphorylation to initiate the unfolded protein response. Dimerization of the kinase domain is important for ribonuclease activity. Interacts (when phosphorylated) with PTC2; the interaction is direct and serves to attenuate the endoplasmic reticulum unfolded protein response. Requires Mg(2+) as cofactor. Autophosphorylated mainly on serine residues; phosphorylation enables nucleotide binding by the active site.

It is found in the endoplasmic reticulum membrane. The catalysed reaction is L-seryl-[protein] + ATP = O-phospho-L-seryl-[protein] + ADP + H(+). It carries out the reaction L-threonyl-[protein] + ATP = O-phospho-L-threonyl-[protein] + ADP + H(+). Its activity is regulated as follows. The kinase domain is activated by trans-autophosphorylation. Kinase activity is required for activation of the endoribonuclease domain. Inactivated by dephosphorylation via recruitment of PTC2. Functionally, senses unfolded proteins in the lumen of the endoplasmic reticulum via its N-terminal domain which leads to enzyme auto-activation. The active endoribonuclease domain splices HAC1 precursor mRNA to produce the mature form which then induces transcription of UPR target genes. This Saccharomyces cerevisiae (strain ATCC 204508 / S288c) (Baker's yeast) protein is Serine/threonine-protein kinase/endoribonuclease IRE1 (IRE1).